Reading from the N-terminus, the 415-residue chain is Gamma-glutamyl phosphate reductase (415 aa).

Belongs to the gamma-glutamyl phosphate reductase family.

The protein localises to the cytoplasm. The enzyme catalyses L-glutamate 5-semialdehyde + phosphate + NADP(+) = L-glutamyl 5-phosphate + NADPH + H(+). Its pathway is amino-acid biosynthesis; L-proline biosynthesis; L-glutamate 5-semialdehyde from L-glutamate: step 2/2. Catalyzes the NADPH-dependent reduction of L-glutamate 5-phosphate into L-glutamate 5-semialdehyde and phosphate. The product spontaneously undergoes cyclization to form 1-pyrroline-5-carboxylate. This is Gamma-glutamyl phosphate reductase from Listeria monocytogenes serotype 4a (strain HCC23).